Here is a 514-residue protein sequence, read N- to C-terminus: Cilia- and flagella-associated protein 53 (514 aa).

2 coiled-coil regions span residues 91-148 and 203-474; these read IINI…RQDF and KLWE…REFE.

The protein belongs to the CFAP53 family. In terms of assembly, microtubule inner protein component of sperm flagellar doublet microtubules. Interacts with PIERCE1 and PIERCE2; the interactions link outer dynein arms docking complex (ODA-DC) to the internal microtubule inner proteins (MIP) in cilium axoneme. Interacts with CCDC38. Interacts with CCDC42 and IFT88. Interacts with centriolar satellite proteins PIBF1/CEP90 and PCM1. Interacts with dyneins DNAIC1, DNAIC2 AND DNAH11 and with ODA-DC component ODAD4/TTC25. Expressed in skin fibroblasts (at protein level). Expressed in nasal respiratory epithelial cells (at protein level). Expressed in airway epithelial cells.

Its subcellular location is the cytoplasm. It localises to the cytoskeleton. The protein localises to the cilium axoneme. It is found in the flagellum axoneme. The protein resides in the microtubule organizing center. Its subcellular location is the centrosome. It localises to the centriole. The protein localises to the centriolar satellite. It is found in the spindle pole. The protein resides in the cell projection. Its subcellular location is the cilium. In terms of biological role, microtubule inner protein (MIP) part of the dynein-decorated doublet microtubules (DMTs) in cilia axoneme, which is required for motile cilia beating. Regulates motility patterns of both 9+0 and 9+2 motile cilia through differential localization and recruitment of axonemal dynein components. Required for centriolar satellite integrity and non-motile cilium assembly. Required for motile cilium formation. Through its role in the beating of primary cilia, involved in the establishment of organ laterality during embryogenesis. Required for sperm flagellum biogenesis and is essential for male fertility. This Homo sapiens (Human) protein is Cilia- and flagella-associated protein 53.